A 449-amino-acid chain; its full sequence is tRNA-2-methylthio-N(6)-dimethylallyladenosine synthase (449 aa).

Positions 3-124 (KMLYIKTYGC…LPTMLEKLDS (122 aa)) constitute an MTTase N-terminal domain. [4Fe-4S] cluster contacts are provided by cysteine 12, cysteine 48, cysteine 87, cysteine 163, cysteine 167, and cysteine 170. Positions 149 to 380 (KSPTVSGLVS…QAQLMQQQLE (232 aa)) constitute a Radical SAM core domain. In terms of domain architecture, TRAM spans 383–447 (QKLIGKVVPV…ASSLFGEVYA (65 aa)).

This sequence belongs to the methylthiotransferase family. MiaB subfamily. Monomer. [4Fe-4S] cluster serves as cofactor.

The protein localises to the cytoplasm. It carries out the reaction N(6)-dimethylallyladenosine(37) in tRNA + (sulfur carrier)-SH + AH2 + 2 S-adenosyl-L-methionine = 2-methylsulfanyl-N(6)-dimethylallyladenosine(37) in tRNA + (sulfur carrier)-H + 5'-deoxyadenosine + L-methionine + A + S-adenosyl-L-homocysteine + 2 H(+). Catalyzes the methylthiolation of N6-(dimethylallyl)adenosine (i(6)A), leading to the formation of 2-methylthio-N6-(dimethylallyl)adenosine (ms(2)i(6)A) at position 37 in tRNAs that read codons beginning with uridine. The protein is tRNA-2-methylthio-N(6)-dimethylallyladenosine synthase of Orientia tsutsugamushi (strain Ikeda) (Rickettsia tsutsugamushi).